The primary structure comprises 431 residues: Protoheme IX farnesyltransferase, mitochondrial (431 aa).

A mitochondrion-targeting transit peptide spans 1-33 (MWRRSVVYRFSSRISVSSSLPNPRLIPWSRELC). The next 9 membrane-spanning stretches (helical) occupy residues 109–129 (LVVA…AISF), 131–153 (GLCY…NQIF), 174–194 (ISVP…ACLL), 200–220 (MLAA…YTPL), 226–246 (INTW…WAAA), 255–275 (MILP…LAHL), 298–317 (IAAV…FIAY), 322–344 (TSSW…AFSF), and 356–376 (MFHA…LHRV).

The protein belongs to the ubiA prenyltransferase (TC 3.D.4.8) family.

It is found in the mitochondrion inner membrane. The enzyme catalyses heme b + (2E,6E)-farnesyl diphosphate + H2O = Fe(II)-heme o + diphosphate. Its function is as follows. Converts protoheme IX and farnesyl diphosphate to heme O. The protein is Protoheme IX farnesyltransferase, mitochondrial (COX10) of Arabidopsis thaliana (Mouse-ear cress).